The following is a 292-amino-acid chain: Elongation factor Ts (292 aa).

The involved in Mg(2+) ion dislocation from EF-Tu stretch occupies residues 79-82 (TDFV).

Belongs to the EF-Ts family.

It localises to the cytoplasm. In terms of biological role, associates with the EF-Tu.GDP complex and induces the exchange of GDP to GTP. It remains bound to the aminoacyl-tRNA.EF-Tu.GTP complex up to the GTP hydrolysis stage on the ribosome. The polypeptide is Elongation factor Ts (tsf) (Idiomarina loihiensis (strain ATCC BAA-735 / DSM 15497 / L2-TR)).